Reading from the N-terminus, the 131-residue chain is MATSVPHPKIVKKYTKKFKRHHSDRYHRVAENWRKQKGIDSCVRRRFRGTIPQPNIGYGSNKKTKFLNPAGYKVYLVKNVKDLDVLLLHTKSYAAEIASSVSSRKRVEIVAKAKKLGVKVTNPKGKLNLEA.

This sequence belongs to the eukaryotic ribosomal protein eL32 family. In terms of assembly, component of the large ribosomal subunit. Mature ribosomes consist of a small (40S) and a large (60S) subunit. The 40S subunit contains about 32 different proteins and 1 molecule of RNA (18S). The 60S subunit contains 45 different proteins and 3 molecules of RNA (25S, 5.8S and 5S).

Its subcellular location is the cytoplasm. Its function is as follows. Component of the ribosome, a large ribonucleoprotein complex responsible for the synthesis of proteins in the cell. The small ribosomal subunit (SSU) binds messenger RNAs (mRNAs) and translates the encoded message by selecting cognate aminoacyl-transfer RNA (tRNA) molecules. The large subunit (LSU) contains the ribosomal catalytic site termed the peptidyl transferase center (PTC), which catalyzes the formation of peptide bonds, thereby polymerizing the amino acids delivered by tRNAs into a polypeptide chain. The nascent polypeptides leave the ribosome through a tunnel in the LSU and interact with protein factors that function in enzymatic processing, targeting, and the membrane insertion of nascent chains at the exit of the ribosomal tunnel. This chain is Large ribosomal subunit protein eL32, found in Candida albicans (strain SC5314 / ATCC MYA-2876) (Yeast).